We begin with the raw amino-acid sequence, 446 residues long: Glycine--tRNA ligase (446 aa).

Substrate-binding residues include Arg-100 and Glu-158. ATP contacts are provided by residues 190 to 192, 200 to 205, 275 to 276, and 319 to 322; these read RNE, FRTREF, EL, and GIER. 205 to 209 lines the substrate pocket; the sequence is FEQFE. Residue 315-319 coordinates substrate; sequence EPAVG.

It belongs to the class-II aminoacyl-tRNA synthetase family. Homodimer.

It localises to the cytoplasm. The enzyme catalyses tRNA(Gly) + glycine + ATP = glycyl-tRNA(Gly) + AMP + diphosphate. In terms of biological role, catalyzes the attachment of glycine to tRNA(Gly). This Mycoplasma genitalium (strain ATCC 33530 / DSM 19775 / NCTC 10195 / G37) (Mycoplasmoides genitalium) protein is Glycine--tRNA ligase.